Consider the following 131-residue polypeptide: Profilin (131 aa).

It belongs to the profilin family. Occurs in many kinds of cells as a complex with monomeric actin in a 1:1 ratio.

The protein resides in the cytoplasm. Its subcellular location is the cytoskeleton. Its function is as follows. Binds to actin and affects the structure of the cytoskeleton. At high concentrations, profilin prevents the polymerization of actin, whereas it enhances it at low concentrations. By binding to PIP2, it inhibits the formation of IP3 and DG. The sequence is that of Profilin from Arachis hypogaea (Peanut).